Reading from the N-terminus, the 246-residue chain is tRNA (guanine-N(1)-)-methyltransferase (246 aa).

S-adenosyl-L-methionine-binding positions include glycine 113 and 133 to 138 (IGDYVL).

It belongs to the RNA methyltransferase TrmD family. In terms of assembly, homodimer.

The protein localises to the cytoplasm. The enzyme catalyses guanosine(37) in tRNA + S-adenosyl-L-methionine = N(1)-methylguanosine(37) in tRNA + S-adenosyl-L-homocysteine + H(+). In terms of biological role, specifically methylates guanosine-37 in various tRNAs. The protein is tRNA (guanine-N(1)-)-methyltransferase of Yersinia pseudotuberculosis serotype O:1b (strain IP 31758).